Reading from the N-terminus, the 853-residue chain is Bromodomain-containing protein bet-1 (853 aa).

Polar residues predominate over residues 1 to 19 (MSEGSGDQSQQRPWASPRQ). Disordered stretches follow at residues 1-22 (MSEG…QQPI) and 141-245 (SLEQ…LRAK). In terms of domain architecture, Bromo 1 spans 39-145 (RHTNKLDYIM…EVIKKSLEQA (107 aa)). A compositionally biased stretch (basic and acidic residues) spans 141–153 (SLEQAPREEHDMD). 2 stretches are compositionally biased toward low complexity: residues 166 to 175 (SDGGSKSSSS) and 192 to 215 (SEVS…SVAA). Residue Lys252 forms a Glycyl lysine isopeptide (Lys-Gly) (interchain with G-Cter in SUMO) linkage. The region spanning 257 to 366 (QPLLPSMKPC…EVFDRRWAEL (110 aa)) is the Bromo 2 domain. Residues 369–381 (SSSRASSVAPQSA) are compositionally biased toward low complexity. Residues 369 to 418 (SSSRASSVAPQSAPIAPTPKVAKSSAPKEPKESRKEHKKETTFEASGAKS) are disordered. Basic and acidic residues predominate over residues 394–410 (APKEPKESRKEHKKETT). Residues 419-458 (EDLMQINNALSMIREREEKLKAELAAAQAIKDKLTSVKNR) are a coiled coil. One can recognise an NET domain in the interval 516–601 (DSDDEDNKMA…TIPTLNGNGD (86 aa)). Disordered stretches follow at residues 594–814 (PTLN…DEQT) and 819–838 (MRME…VSLS). Over residues 612–624 (TSSGATGSKGSSS) the composition is skewed to low complexity. Residues 684-696 (QPPSTSREWNQSS) are compositionally biased toward polar residues. Residues 708 to 736 (QPPMSRVPASSSTSVSAIGKNNAAASSNS) are compositionally biased toward low complexity. Over residues 786–807 (QFFQSQPTTSATIRSPTESQPG) the composition is skewed to polar residues. Over residues 819–832 (MRMEAKRARQKEDE) the composition is skewed to basic and acidic residues.

Belongs to the BET family. As to quaternary structure, interacts with acetylated histone H4. Interacts (via BROMO domain 2) with smo-1 and ubc-9. Expressed in T-cells, Q-cells, V5-cells and their descendants such as somatic gonad and syncytium.

It localises to the nucleus. The protein resides in the chromosome. Its function is as follows. Required for the establishment and maintenance of stable cell fate in several lineages including V5.pa, T, Z1/Z4 and QR lineages probably by repressing the expression of cell fate determinants. Required to maintain non-distal tip cell (DTC) fate of somatic gonadal cells through the htz-1-mediated repression of transcription factor ceh-22. Regulates the subnuclear localization of histone variant htz-1 in somatic gonadal cells. Plays a role in the attenuation of the let-60/ras pathway, probably by preventing expression of activators of the pathway. Involved in adult locomotion. Acts together with the sumoylation pathway to prevent muscle myosin depletion in aging adults probably by preventing myoblast growth factor receptor egl-15 overexpression. May play a role in vulva development. The sequence is that of Bromodomain-containing protein bet-1 from Caenorhabditis elegans.